Consider the following 511-residue polypeptide: Cytochrome P450 monooxygenase prhD (511 aa).

An N-linked (GlcNAc...) asparagine glycan is attached at N7. The helical transmembrane segment at 10–30 (GNGMGLLIPLGLSWLIWTILL) threads the bilayer. C444 contributes to the heme binding site. N-linked (GlcNAc...) asparagine glycosylation occurs at N502.

Belongs to the cytochrome P450 family. Heme serves as cofactor.

Its subcellular location is the membrane. It functions in the pathway secondary metabolite biosynthesis; terpenoid biosynthesis. In terms of biological role, cytochrome P450 monooxygenase; part of the gene cluster that mediates the biosynthesis of paraherquonin, a meroterpenoid with a unique, highly congested hexacyclic molecular architecture. The first step of the pathway is the synthesis of 3,5-dimethylorsellinic acid (DMOA) by the polyketide synthase prhL. Synthesis of DMOA is followed by farnesylation by the prenyltransferase prhE, methylesterification by the methyl-transferase prhM, epoxidation of the prenyl chain by the flavin-dependent monooxygenase prhF, and cyclization of the farnesyl moiety by the terpene cyclase prhH, to yield the tetracyclic intermediate, protoaustinoid A. The short chain dehydrogenase prhI then oxidizes the C-3 alcohol group of the terpene cyclase product to transform protoaustinoid A into protoaustinoid B. The FAD-binding monooxygenase prhJ catalyzes the oxidation of protoaustinoid B into preaustinoid A which is further oxidized into preaustinoid A1 by FAD-binding monooxygenase phrK. Finally, prhA leads to berkeleydione via the berkeleyone B intermediate. PrhA is a multifunctional dioxygenase that first desaturates at C5-C6 to form berkeleyone B, followed by rearrangement of the A/B-ring to form the cycloheptadiene moiety in berkeleydione. Berkeleydione serves as the key intermediate for the biosynthesis of paraherquonin as well as many other meroterpenoids. The cytochrome P450 monooxygenases prhB, prhD, and prhN, as well as the isomerase prhC, are probably involved in the late stage of paraherquonin biosynthesis, after the production of berkeleydione. Especially prhC might be a multifunctional enzyme that catalyzes the D-ring expansion via intramolecular methoxy rearrangement, as well as the hydrolysis of the expanded D-ring. The protein is Cytochrome P450 monooxygenase prhD of Penicillium brasilianum.